The sequence spans 248 residues: Flavodoxin/ferredoxin--NADP reductase (248 aa).

In terms of domain architecture, FAD-binding FR-type spans 2-101 (ADWVTGKVTK…SEAAGFFVLD (100 aa)). Aspartate 17 contributes to the NADP(+) binding site. Residues 50–53 (RAYS), tyrosine 66, 74–76 (KLS), and threonine 116 contribute to the FAD site. Residues 143-144 (AR), 173-174 (SR), arginine 184, 214-216 (NPQ), and aspartate 220 each bind NADP(+). 247-248 (YW) provides a ligand contact to FAD.

The protein belongs to the ferredoxin--NADP reductase type 1 family. Monomer. Requires FAD as cofactor.

Its subcellular location is the cytoplasm. It catalyses the reaction 2 reduced [2Fe-2S]-[ferredoxin] + NADP(+) + H(+) = 2 oxidized [2Fe-2S]-[ferredoxin] + NADPH. The enzyme catalyses reduced [flavodoxin] + NADP(+) = oxidized [flavodoxin] + NADPH + 2 H(+). In terms of biological role, transports electrons between flavodoxin or ferredoxin and NADPH. Reduces flavodoxin 1, flavodoxin 2 and ferredoxin, ferredoxin being the kinetically and thermodynamically preferred partner. Required for the activation of several enzymes such as pyruvate formate-lyase, anaerobic ribonucleotide reductase and cobalamin-dependent methionine synthase. This chain is Flavodoxin/ferredoxin--NADP reductase, found in Escherichia coli (strain K12).